A 156-amino-acid chain; its full sequence is Small ribosomal subunit protein uS7 (156 aa).

The protein belongs to the universal ribosomal protein uS7 family. In terms of assembly, part of the 30S ribosomal subunit. Contacts proteins S9 and S11.

Its function is as follows. One of the primary rRNA binding proteins, it binds directly to 16S rRNA where it nucleates assembly of the head domain of the 30S subunit. Is located at the subunit interface close to the decoding center, probably blocks exit of the E-site tRNA. This is Small ribosomal subunit protein uS7 from Burkholderia multivorans (strain ATCC 17616 / 249).